An 855-amino-acid chain; its full sequence is DNA mismatch repair protein MutS (855 aa).

Residue 616 to 623 (GPNMGGKS) participates in ATP binding.

Belongs to the DNA mismatch repair MutS family.

This protein is involved in the repair of mismatches in DNA. It is possible that it carries out the mismatch recognition step. This protein has a weak ATPase activity. This is DNA mismatch repair protein MutS from Salmonella schwarzengrund (strain CVM19633).